Consider the following 80-residue polypeptide: Ataxin-8 (80 aa).

As to expression, specifically found in brains from SCA8 patients (at protein level).

It localises to the nucleus. In Homo sapiens (Human), this protein is Ataxin-8 (ATXN8).